The chain runs to 330 residues: Beta-ketoacyl-[acyl-carrier-protein] synthase III (330 aa).

Catalysis depends on residues Cys114 and His257. Residues 258-262 are ACP-binding; it reads QANLR. The active site involves Asn287.

This sequence belongs to the thiolase-like superfamily. FabH family. In terms of assembly, homodimer.

The protein resides in the cytoplasm. The catalysed reaction is malonyl-[ACP] + acetyl-CoA + H(+) = 3-oxobutanoyl-[ACP] + CO2 + CoA. Its pathway is lipid metabolism; fatty acid biosynthesis. Its function is as follows. Catalyzes the condensation reaction of fatty acid synthesis by the addition to an acyl acceptor of two carbons from malonyl-ACP. Catalyzes the first condensation reaction which initiates fatty acid synthesis and may therefore play a role in governing the total rate of fatty acid production. Possesses both acetoacetyl-ACP synthase and acetyl transacylase activities. Its substrate specificity determines the biosynthesis of branched-chain and/or straight-chain of fatty acids. This Oleidesulfovibrio alaskensis (strain ATCC BAA-1058 / DSM 17464 / G20) (Desulfovibrio alaskensis) protein is Beta-ketoacyl-[acyl-carrier-protein] synthase III.